The primary structure comprises 364 residues: Aminomethyltransferase (364 aa).

This sequence belongs to the GcvT family. In terms of assembly, the glycine cleavage system is composed of four proteins: P, T, L and H.

The catalysed reaction is N(6)-[(R)-S(8)-aminomethyldihydrolipoyl]-L-lysyl-[protein] + (6S)-5,6,7,8-tetrahydrofolate = N(6)-[(R)-dihydrolipoyl]-L-lysyl-[protein] + (6R)-5,10-methylene-5,6,7,8-tetrahydrofolate + NH4(+). Functionally, the glycine cleavage system catalyzes the degradation of glycine. The chain is Aminomethyltransferase from Shewanella piezotolerans (strain WP3 / JCM 13877).